A 501-amino-acid polypeptide reads, in one-letter code: Bifunctional purine biosynthesis protein PurH (501 aa).

The region spanning 1–144 (MKKRALISVF…KNFKDVVVLS (144 aa)) is the MGS-like domain.

This sequence belongs to the PurH family.

The catalysed reaction is (6R)-10-formyltetrahydrofolate + 5-amino-1-(5-phospho-beta-D-ribosyl)imidazole-4-carboxamide = 5-formamido-1-(5-phospho-D-ribosyl)imidazole-4-carboxamide + (6S)-5,6,7,8-tetrahydrofolate. It carries out the reaction IMP + H2O = 5-formamido-1-(5-phospho-D-ribosyl)imidazole-4-carboxamide. It functions in the pathway purine metabolism; IMP biosynthesis via de novo pathway; 5-formamido-1-(5-phospho-D-ribosyl)imidazole-4-carboxamide from 5-amino-1-(5-phospho-D-ribosyl)imidazole-4-carboxamide (10-formyl THF route): step 1/1. It participates in purine metabolism; IMP biosynthesis via de novo pathway; IMP from 5-formamido-1-(5-phospho-D-ribosyl)imidazole-4-carboxamide: step 1/1. In Clostridium perfringens (strain ATCC 13124 / DSM 756 / JCM 1290 / NCIMB 6125 / NCTC 8237 / Type A), this protein is Bifunctional purine biosynthesis protein PurH.